Reading from the N-terminus, the 278-residue chain is Elongation factor Ts (278 aa).

Residues Thr80 to Val83 form an involved in Mg(2+) ion dislocation from EF-Tu region.

It belongs to the EF-Ts family.

It localises to the cytoplasm. Functionally, associates with the EF-Tu.GDP complex and induces the exchange of GDP to GTP. It remains bound to the aminoacyl-tRNA.EF-Tu.GTP complex up to the GTP hydrolysis stage on the ribosome. This is Elongation factor Ts from Paenarthrobacter aurescens (strain TC1).